The chain runs to 528 residues: Ecdysteroid UDP-glucosyltransferase (528 aa).

The N-terminal stretch at 1-32 (MGHLHIVHWRLTMNGAIAALFLCLVMVHQQHA) is a signal peptide.

The protein belongs to the UDP-glycosyltransferase family.

In terms of biological role, catalyzes the transfer of glucose from UDP-glucose to ecdysteroids which are insect molting hormones. Expression of egt interferes with normal insect development and block molting. This is Ecdysteroid UDP-glucosyltransferase (EGT) from Mamestra brassicae nuclear polyhedrosis virus (MbNPV).